Reading from the N-terminus, the 194-residue chain is Adenylate kinase isoenzyme 1 (194 aa).

Residue 19–24 (GSGKGT) coordinates ATP. The interval 39–68 (STGDLLRAEVSSGSERGKKLQAIMEKGELV) is NMP. Residues Thr-40, Arg-45, 66–68 (ELV), 95–98 (GYPR), and Gln-102 contribute to the AMP site. Residues 132-142 (KRGETSGRVDD) form an LID region. Arg-133 is a binding site for ATP. Residues Arg-139 and Arg-150 each coordinate AMP. Gly-178 is an ATP binding site.

The protein belongs to the adenylate kinase family. AK1 subfamily. As to quaternary structure, monomer. Mg(2+) is required as a cofactor. As to expression, skeletal muscle.

The protein localises to the cytoplasm. It catalyses the reaction a ribonucleoside 5'-phosphate + ATP = a ribonucleoside 5'-diphosphate + ADP. It carries out the reaction AMP + ATP = 2 ADP. The catalysed reaction is dAMP + ATP = dADP + ADP. The enzyme catalyses dATP + AMP = dADP + ADP. It catalyses the reaction dAMP + dATP = 2 dADP. It carries out the reaction a 2'-deoxyribonucleoside 5'-diphosphate + ATP = a 2'-deoxyribonucleoside 5'-triphosphate + ADP. The catalysed reaction is a ribonucleoside 5'-diphosphate + ATP = a ribonucleoside 5'-triphosphate + ADP. The enzyme catalyses CDP + GTP = CTP + GDP. It catalyses the reaction GDP + ATP = GTP + ADP. It carries out the reaction UDP + ATP = UTP + ADP. The catalysed reaction is GTP + UDP = UTP + GDP. The enzyme catalyses dTDP + GTP = dTTP + GDP. It catalyses the reaction dCDP + GTP = dCTP + GDP. It carries out the reaction dGDP + ATP = dGTP + ADP. The catalysed reaction is dADP + GTP = dATP + GDP. The enzyme catalyses thiamine diphosphate + ADP = thiamine triphosphate + AMP. In terms of biological role, catalyzes the reversible transfer of the terminal phosphate group between ATP and AMP. Also displays broad nucleoside diphosphate kinase activity. Plays an important role in cellular energy homeostasis and in adenine nucleotide metabolism. Also catalyzes at a very low rate the synthesis of thiamine triphosphate (ThTP) from thiamine diphosphate (ThDP) and ADP. The sequence is that of Adenylate kinase isoenzyme 1 from Gallus gallus (Chicken).